The following is a 140-amino-acid chain: Baculoviral IAP repeat-containing protein 5 (140 aa).

Residues 18–88 form a BIR repeat; it reads RIATFKNWPF…KHSPGCAFLT (71 aa). Residue lysine 23 is modified to N6-acetyllysine. Threonine 34 bears the Phosphothreonine; by CDK1 and CDK15 mark. At threonine 48 the chain carries Phosphothreonine. Positions 57, 60, 76, 77, 80, and 84 each coordinate Zn(2+). Lysine 90, lysine 110, lysine 112, and lysine 115 each carry N6-acetyllysine. Residues 113-129 are compositionally biased toward basic and acidic residues; that stretch reads IAKETNNKQKEFEETAK. The disordered stretch occupies residues 113–140; it reads IAKETNNKQKEFEETAKTTRQSIEQLAA. Threonine 117 is modified (phosphothreonine; by AURKB). At lysine 129 the chain carries N6-acetyllysine. Over residues 130 to 140 the composition is skewed to polar residues; it reads TTRQSIEQLAA.

Belongs to the IAP family. In terms of assembly, monomer or homodimer. Exists as a homodimer in the apo state and as a monomer in the CPC-bound state. The monomer protects cells against apoptosis more efficiently than the dimer. Only the dimeric form is capable of enhancing tubulin stability in cells. When phosphorylated, interacts with LAMTOR5/HBXIP; the resulting complex binds pro-CASP9, as well as active CASP9, but much less efficiently. Component of the chromosomal passenger complex (CPC) composed of at least BIRC5/survivin, CDCA8/borealin, INCENP, AURKB or AURKC; in the complex forms a triple-helix bundle-based subcomplex with INCENP and CDCA8. Interacts with JTB. Interacts (via BIR domain) with histone H3 phosphorylated at 'Thr-3' (H3pT3). Interacts with EVI5. Interacts with GTP-bound RAN in both the S and M phases of the cell cycle. Interacts with USP9X. Interacts with tubulin. Interacts with BIRC2/c-IAP1. The acetylated form at Lys-129 interacts with STAT3. The monomeric form deacetylated at Lys-129 interacts with XPO1/CRM1. The monomeric form interacts with XIAP/BIRC4. Both the dimeric and monomeric form can interact with DIABLO/SMAC. Interacts with BIRC6/bruce. Interacts with FBXL7; this interaction facilitates the polyubiquitination and subsequent proteasomal degradation of BIRC5 by the SCF(FBXL7) E3 ubiquitin-protein ligase complex. In terms of processing, ubiquitinated by the Cul9-RING ubiquitin-protein ligase complex, leading to its degradation. Ubiquitination is required for centrosomal targeting. Deubiquitinated by USP35 or USP38; leading to stabilization. Acetylation at Lys-129 results in its homodimerization, while deacetylation promotes the formation of monomers which heterodimerize with XPO1/CRM1 which facilitates its nuclear export. The acetylated form represses STAT3 transactivation. The dynamic equilibrium between its acetylation and deacetylation at Lys-129 determines its interaction with XPO1/CRM1, its subsequent subcellular localization, and its ability to inhibit STAT3 transactivation. Post-translationally, in vitro phosphorylation at Thr-117 by AURKB prevents interaction with INCENP and localization to mitotic chromosomes. Phosphorylation at Thr-48 by CK2 is critical for its mitotic and anti-apoptotic activities. Phosphorylation at Thr-34 by CDK15 is critical for its anti-apoptotic activity.

The protein localises to the cytoplasm. Its subcellular location is the nucleus. The protein resides in the chromosome. It localises to the centromere. It is found in the cytoskeleton. The protein localises to the spindle. Its subcellular location is the kinetochore. The protein resides in the midbody. Multitasking protein that has dual roles in promoting cell proliferation and preventing apoptosis. Component of a chromosome passage protein complex (CPC) which is essential for chromosome alignment and segregation during mitosis and cytokinesis. Acts as an important regulator of the localization of this complex; directs CPC movement to different locations from the inner centromere during prometaphase to midbody during cytokinesis and participates in the organization of the center spindle by associating with polymerized microtubules. Involved in the recruitment of CPC to centromeres during early mitosis via association with histone H3 phosphorylated at 'Thr-3' (H3pT3) during mitosis. The complex with RAN plays a role in mitotic spindle formation by serving as a physical scaffold to help deliver the RAN effector molecule TPX2 to microtubules. May counteract a default induction of apoptosis in G2/M phase. The acetylated form represses STAT3 transactivation of target gene promoters. May play a role in neoplasia. Inhibitor of CASP3 and CASP7. Essential for the maintenance of mitochondrial integrity and function. This is Baculoviral IAP repeat-containing protein 5 (Birc5) from Mus musculus (Mouse).